The sequence spans 590 residues: Putative DEAD-box ATP-dependent RNA helicase 51 (590 aa).

The interval 1–81 (MHPIKLCARS…KQGEGKKGSG (81 aa)) is disordered. Residues 40–51 (AACNSEGENNAT) show a composition bias toward polar residues. A compositionally biased stretch (basic and acidic residues) spans 59-78 (NKKMKEEKSKRKKKQGEGKK). Residues 86 to 114 (KLFSDLPISDLTANAIRDMNYTHLTEIQA) carry the Q motif motif. The Helicase ATP-binding domain occupies 117-293 (IPPLMLGSDV…KLTFGSKEER (177 aa)). Residue 130–137 (AKTGSGKT) participates in ATP binding. A DEAD box motif is present at residues 240 to 243 (DEAD). Residues 329 to 481 (VLYAFLKKAL…ELVPKLQPYL (153 aa)) enclose the Helicase C-terminal domain. The interval 549–590 (LESSASKHRKKRNVNTGRRHGIGPSNPYGRKGSDDRRQFARF) is disordered. Over residues 554 to 569 (SKHRKKRNVNTGRRHG) the composition is skewed to basic residues. A compositionally biased stretch (basic and acidic residues) spans 579–590 (KGSDDRRQFARF).

This sequence belongs to the DEAD box helicase family. DDX18/HAS1 subfamily.

It carries out the reaction ATP + H2O = ADP + phosphate + H(+). This is Putative DEAD-box ATP-dependent RNA helicase 51 from Oryza sativa subsp. japonica (Rice).